A 132-amino-acid chain; its full sequence is Agouti-signaling protein (132 aa).

Residues 1–22 (MDVTRLLLATLLVFLCFFTAYS) form the signal peptide. N-linked (GlcNAc...) asparagine glycosylation is present at asparagine 39. Over residues 61 to 79 (EISRKEAEKKRSSKKEASM) the composition is skewed to basic and acidic residues. Residues 61 to 87 (EISRKEAEKKRSSKKEASMKKVARPRT) form a disordered region. Cystine bridges form between cysteine 93–cysteine 108, cysteine 100–cysteine 114, cysteine 107–cysteine 125, cysteine 111–cysteine 132, and cysteine 116–cysteine 123. The Agouti domain maps to 93–132 (CVATRDSCKPPAPACCDPCASCQCRFFRSACSCRVLSLNC).

It is found in the secreted. In terms of biological role, involved in the regulation of melanogenesis. The binding of ASP to MC1R precludes alpha-MSH initiated signaling and thus blocks production of cAMP, leading to a down-regulation of eumelanogenesis (brown/black pigment) and thus increasing synthesis of pheomelanin (yellow/red pigment). The polypeptide is Agouti-signaling protein (ASIP) (Macaca fascicularis (Crab-eating macaque)).